We begin with the raw amino-acid sequence, 302 residues long: Putative S-adenosyl-L-methionine-dependent methyltransferase MAB_4586c (302 aa).

Residues Asp-122 and 151 to 152 (DL) contribute to the S-adenosyl-L-methionine site.

Belongs to the UPF0677 family.

Its function is as follows. Exhibits S-adenosyl-L-methionine-dependent methyltransferase activity. In Mycobacteroides abscessus (strain ATCC 19977 / DSM 44196 / CCUG 20993 / CIP 104536 / JCM 13569 / NCTC 13031 / TMC 1543 / L948) (Mycobacterium abscessus), this protein is Putative S-adenosyl-L-methionine-dependent methyltransferase MAB_4586c.